The chain runs to 507 residues: Glycosyltransferase family 92 protein C33H5.2 (507 aa).

The helical transmembrane segment at valine 6–tyrosine 26 threads the bilayer. A GT92 domain is found at arginine 155–aspartate 444.

The protein belongs to the glycosyltransferase 92 family.

The protein resides in the membrane. The chain is Glycosyltransferase family 92 protein C33H5.2 from Caenorhabditis elegans.